Reading from the N-terminus, the 543-residue chain is Tubby-related protein 1 (543 aa).

The interval 1 to 290 is disordered; it reads MPLQEETLRE…RASSPPVEVG (290 aa). Composition is skewed to basic and acidic residues over residues 46 to 56 and 86 to 99; these read PETPDSLESKP and FLRD…DPRE. 2 stretches are compositionally biased toward acidic residues: residues 110-132 and 244-255; these read GGEE…EEEE and KKEEEEEVEEEV. Over residues 267 to 276 the composition is skewed to basic residues; sequence GRAKGKGKKK.

This sequence belongs to the TUB family. As to quaternary structure, homodimer. May interact with ABCF1, PSIP1, ZEB1 and HMGB2 (Potential). Interacts with F-actin. Interacts with DNM1. Interacts with TUB. Interacts with TYRO3. As to expression, retina specific. Detected in the outer plexiform layer in photoreceptor cells (at protein level).

It localises to the cytoplasm. The protein localises to the cell membrane. It is found in the secreted. The protein resides in the synapse. Functionally, required for normal development of photoreceptor synapses. Required for normal photoreceptor function and for long-term survival of photoreceptor cells. Interacts with cytoskeleton proteins and may play a role in protein transport in photoreceptor cells. Binds lipids, especially phosphatidylinositol 3-phosphate, phosphatidylinositol 4-phosphate, phosphatidylinositol 5-phosphate, phosphatidylinositol 3,4-bisphosphate, phosphatidylinositol 4,5-bisphosphate, phosphatidylinositol 3,4,5-bisphosphate, phosphatidylserine and phosphatidic acid (in vitro). Contribute to stimulation of phagocytosis of apoptotic retinal pigment epithelium (RPE) cells and macrophages. The protein is Tubby-related protein 1 (Tulp1) of Mus musculus (Mouse).